A 422-amino-acid polypeptide reads, in one-letter code: Isocitrate dehydrogenase [NADP] (422 aa).

Threonine 94 is a binding site for NADP(+). Serine 103, asparagine 105, arginine 109, arginine 119, and arginine 143 together coordinate D-threo-isocitrate. A Mg(2+)-binding site is contributed by aspartate 310. Residues 344-350, asparagine 357, tyrosine 396, and arginine 400 contribute to the NADP(+) site; that span reads HGTAPKY.

It belongs to the isocitrate and isopropylmalate dehydrogenases family. In terms of assembly, homodimer. Mg(2+) serves as cofactor. Requires Mn(2+) as cofactor.

The enzyme catalyses D-threo-isocitrate + NADP(+) = 2-oxoglutarate + CO2 + NADPH. Its function is as follows. Catalyzes the oxidative decarboxylation of isocitrate to 2-oxoglutarate and carbon dioxide with the concomitant reduction of NADP(+). This Staphylococcus epidermidis (strain ATCC 35984 / DSM 28319 / BCRC 17069 / CCUG 31568 / BM 3577 / RP62A) protein is Isocitrate dehydrogenase [NADP] (icd).